We begin with the raw amino-acid sequence, 255 residues long: DNA repair protein RecO (255 aa).

This sequence belongs to the RecO family.

Functionally, involved in DNA repair and RecF pathway recombination. This chain is DNA repair protein RecO, found in Listeria welshimeri serovar 6b (strain ATCC 35897 / DSM 20650 / CCUG 15529 / CIP 8149 / NCTC 11857 / SLCC 5334 / V8).